A 172-amino-acid chain; its full sequence is Translationally-controlled tumor protein homolog (172 aa).

Residues 1–172 form the TCTP domain; that stretch reads MIIYKDCITE…FKDGLIIEKC (172 aa).

This sequence belongs to the TCTP family.

It is found in the cytoplasm. Functionally, involved in calcium binding and microtubule stabilization. The polypeptide is Translationally-controlled tumor protein homolog (tpt1) (Xenopus laevis (African clawed frog)).